We begin with the raw amino-acid sequence, 262 residues long: Ribosomal RNA small subunit methyltransferase A (262 aa).

The S-adenosyl-L-methionine site is built by N14, L16, G41, E63, D85, and N105.

It belongs to the class I-like SAM-binding methyltransferase superfamily. rRNA adenine N(6)-methyltransferase family. RsmA subfamily.

Its subcellular location is the cytoplasm. It carries out the reaction adenosine(1518)/adenosine(1519) in 16S rRNA + 4 S-adenosyl-L-methionine = N(6)-dimethyladenosine(1518)/N(6)-dimethyladenosine(1519) in 16S rRNA + 4 S-adenosyl-L-homocysteine + 4 H(+). Specifically dimethylates two adjacent adenosines (A1518 and A1519) in the loop of a conserved hairpin near the 3'-end of 16S rRNA in the 30S particle. May play a critical role in biogenesis of 30S subunits. The sequence is that of Ribosomal RNA small subunit methyltransferase A from Maridesulfovibrio salexigens (strain ATCC 14822 / DSM 2638 / NCIMB 8403 / VKM B-1763) (Desulfovibrio salexigens).